The primary structure comprises 118 residues: Large ribosomal subunit protein bL19 (118 aa).

This sequence belongs to the bacterial ribosomal protein bL19 family.

Its function is as follows. This protein is located at the 30S-50S ribosomal subunit interface and may play a role in the structure and function of the aminoacyl-tRNA binding site. In Dictyoglomus thermophilum (strain ATCC 35947 / DSM 3960 / H-6-12), this protein is Large ribosomal subunit protein bL19.